Reading from the N-terminus, the 316-residue chain is L-lactate dehydrogenase (316 aa).

NAD(+)-binding positions include V15, D37, K42, Y68, and G82 to L83. Substrate-binding positions include Q85, R91, and N123 to D126. Residues A121–N123 and T146 each bind NAD(+). D151–R154 contacts substrate. The beta-D-fructose 1,6-bisphosphate site is built by R156 and H171. H178 (proton acceptor) is an active-site residue. Y222 bears the Phosphotyrosine mark. T231 lines the substrate pocket.

This sequence belongs to the LDH/MDH superfamily. LDH family. As to quaternary structure, homotetramer.

Its subcellular location is the cytoplasm. The enzyme catalyses (S)-lactate + NAD(+) = pyruvate + NADH + H(+). The protein operates within fermentation; pyruvate fermentation to lactate; (S)-lactate from pyruvate: step 1/1. With respect to regulation, allosterically activated by fructose 1,6-bisphosphate (FBP). Its function is as follows. Catalyzes the conversion of lactate to pyruvate. This is L-lactate dehydrogenase from Borrelia hermsii (strain HS1 / DAH).